Here is a 406-residue protein sequence, read N- to C-terminus: Tyrosine--tRNA ligase (406 aa).

Tyrosine 35 serves as a coordination point for L-tyrosine. A 'HIGH' region motif is present at residues 40-49; it reads PTADSLHVGH. L-tyrosine-binding residues include tyrosine 168 and glutamine 172. The short motif at 228–232 is the 'KMSKS' region element; the sequence is KMGKT. An ATP-binding site is contributed by lysine 231. Positions 340–404 constitute an S4 RNA-binding domain; the sequence is STVLDIIAKT…RGKKNYNKIE (65 aa).

Belongs to the class-I aminoacyl-tRNA synthetase family. TyrS type 1 subfamily. Homodimer.

The protein localises to the cytoplasm. The catalysed reaction is tRNA(Tyr) + L-tyrosine + ATP = L-tyrosyl-tRNA(Tyr) + AMP + diphosphate + H(+). Functionally, catalyzes the attachment of tyrosine to tRNA(Tyr) in a two-step reaction: tyrosine is first activated by ATP to form Tyr-AMP and then transferred to the acceptor end of tRNA(Tyr). In Clostridium botulinum (strain Alaska E43 / Type E3), this protein is Tyrosine--tRNA ligase.